Reading from the N-terminus, the 888-residue chain is Probable disease resistance protein At5g63020 (888 aa).

Residues 22–66 adopt a coiled-coil conformation; that stretch reads LNRNGDYIHGLEENLTALQRALEQIEQRREDLLRKILSEERRGLQ. Positions 139 to 442 constitute an NB-ARC domain; that stretch reads AERVDAARVE…GEGFIDRNKG (304 aa). 181–188 contacts ATP; the sequence is GMGGVGKT. LRR repeat units follow at residues 512–533, 534–555, 558–580, 582–604, and 605–627; these read VARRVSLMFNNIESIRDAPESP, QLITLLLRKNFLGHISSSFFRL, MLVVLDLSMNRDLRHLPNEISEC, SLQYLSLSRTRIRIWPAGLVELR, and KLLYLNLEYTRMVESICGISGLT.

This sequence belongs to the disease resistance NB-LRR family.

Functionally, probable disease resistance protein. The protein is Probable disease resistance protein At5g63020 of Arabidopsis thaliana (Mouse-ear cress).